The chain runs to 276 residues: Type III pantothenate kinase (276 aa).

18-25 provides a ligand contact to ATP; that stretch reads EIGNSRLH. Substrate contacts are provided by residues Tyr116 and 120–123; that span reads GIDR. Asp122 functions as the Proton acceptor in the catalytic mechanism. Residue Asp142 participates in K(+) binding. An ATP-binding site is contributed by Thr145. Substrate is bound at residue Thr200.

Belongs to the type III pantothenate kinase family. Homodimer. Requires NH4(+) as cofactor. K(+) serves as cofactor.

Its subcellular location is the cytoplasm. It carries out the reaction (R)-pantothenate + ATP = (R)-4'-phosphopantothenate + ADP + H(+). It functions in the pathway cofactor biosynthesis; coenzyme A biosynthesis; CoA from (R)-pantothenate: step 1/5. Catalyzes the phosphorylation of pantothenate (Pan), the first step in CoA biosynthesis. In Nostoc sp. (strain PCC 7120 / SAG 25.82 / UTEX 2576), this protein is Type III pantothenate kinase.